Reading from the N-terminus, the 144-residue chain is NADH dehydrogenase [ubiquinone] 1 alpha subcomplex subunit 13 (144 aa).

N-acetylalanine is present on alanine 2. Residues 30–51 traverse the membrane as a helical segment; the sequence is LSGYSMFAVGIGALIFGYWRMM.

Belongs to the complex I NDUFA13 subunit family. Complex I is composed of 45 different subunits. Interacts with CARD15, but not with CARD4. Interacts with STAT3, but not with STAT1, STAT2 and STAT5A. Interacts with OLFM4.

Its subcellular location is the mitochondrion inner membrane. It localises to the nucleus. Its function is as follows. Accessory subunit of the mitochondrial membrane respiratory chain NADH dehydrogenase (Complex I), that is believed not to be involved in catalysis. Complex I functions in the transfer of electrons from NADH to the respiratory chain. The immediate electron acceptor for the enzyme is believed to be ubiquinone. Involved in the interferon/all-trans-retinoic acid (IFN/RA) induced cell death. This apoptotic activity is inhibited by interaction with viral IRF1. Prevents the transactivation of STAT3 target genes. May play a role in CARD15-mediated innate mucosal responses and serve to regulate intestinal epithelial cell responses to microbes. This Mus musculus (Mouse) protein is NADH dehydrogenase [ubiquinone] 1 alpha subcomplex subunit 13 (Ndufa13).